Here is a 323-residue protein sequence, read N- to C-terminus: Small ribosomal subunit protein uS3 (323 aa).

Residues 17–86 (IDEFFADELG…DPQIDVQEVD (70 aa)) form the KH type-2 domain. The segment at 251 to 303 (ADPGVSSEDEEVVTEPVDIGGDDEDVEDIEVVSDDSGNDTETVAEEVEELDAE) is disordered. The segment covering 270 to 303 (GGDDEDVEDIEVVSDDSGNDTETVAEEVEELDAE) has biased composition (acidic residues).

This sequence belongs to the universal ribosomal protein uS3 family. As to quaternary structure, part of the 30S ribosomal subunit.

Its function is as follows. Binds the lower part of the 30S subunit head. The chain is Small ribosomal subunit protein uS3 from Haloquadratum walsbyi (strain DSM 16790 / HBSQ001).